The primary structure comprises 336 residues: Eukaryotic translation initiation factor 3 subunit I (336 aa).

6 WD repeats span residues 8 to 49, 50 to 91, 93 to 135, 144 to 183, 187 to 226, and 285 to 324; these read GHER…GTYN, GHNG…KAWE, PTAI…GPQP, PIGSKAQVVAFSSLDKHLITGHENGKVALWDVNTGEEVAS, NHIGLITDLQMSADRTYFVTSSKDKSARLYDSRTLEVIKS, and GGFGPCNSIAVHPEGKGYAIGGEDGYVRLHHFDENTFRAK.

This sequence belongs to the eIF-3 subunit I family. Component of the eukaryotic translation initiation factor 3 (eIF-3) complex.

It is found in the cytoplasm. In terms of biological role, component of the eukaryotic translation initiation factor 3 (eIF-3) complex, which is involved in protein synthesis of a specialized repertoire of mRNAs and, together with other initiation factors, stimulates binding of mRNA and methionyl-tRNAi to the 40S ribosome. The eIF-3 complex specifically targets and initiates translation of a subset of mRNAs involved in cell proliferation. This is Eukaryotic translation initiation factor 3 subunit I from Puccinia graminis f. sp. tritici (strain CRL 75-36-700-3 / race SCCL) (Black stem rust fungus).